A 246-amino-acid chain; its full sequence is 2,3-bisphosphoglycerate-dependent phosphoglycerate mutase (246 aa).

Residues 9–16, 22–23, Arg-61, 88–91, Lys-99, 115–116, and 181–182 contribute to the substrate site; these read RHGQSAWN, TG, ERHY, RR, and GN. His-10 functions as the Tele-phosphohistidine intermediate in the catalytic mechanism. Glu-88 acts as the Proton donor/acceptor in catalysis.

Belongs to the phosphoglycerate mutase family. BPG-dependent PGAM subfamily.

The enzyme catalyses (2R)-2-phosphoglycerate = (2R)-3-phosphoglycerate. It participates in carbohydrate degradation; glycolysis; pyruvate from D-glyceraldehyde 3-phosphate: step 3/5. Functionally, catalyzes the interconversion of 2-phosphoglycerate and 3-phosphoglycerate. This is 2,3-bisphosphoglycerate-dependent phosphoglycerate mutase from Bifidobacterium longum (strain DJO10A).